The sequence spans 179 residues: ATP synthase subunit delta (179 aa).

Belongs to the ATPase delta chain family. As to quaternary structure, F-type ATPases have 2 components, F(1) - the catalytic core - and F(0) - the membrane proton channel. F(1) has five subunits: alpha(3), beta(3), gamma(1), delta(1), epsilon(1). F(0) has three main subunits: a(1), b(2) and c(10-14). The alpha and beta chains form an alternating ring which encloses part of the gamma chain. F(1) is attached to F(0) by a central stalk formed by the gamma and epsilon chains, while a peripheral stalk is formed by the delta and b chains.

Its subcellular location is the cell membrane. Its function is as follows. F(1)F(0) ATP synthase produces ATP from ADP in the presence of a proton or sodium gradient. F-type ATPases consist of two structural domains, F(1) containing the extramembraneous catalytic core and F(0) containing the membrane proton channel, linked together by a central stalk and a peripheral stalk. During catalysis, ATP synthesis in the catalytic domain of F(1) is coupled via a rotary mechanism of the central stalk subunits to proton translocation. Functionally, this protein is part of the stalk that links CF(0) to CF(1). It either transmits conformational changes from CF(0) to CF(1) or is implicated in proton conduction. The sequence is that of ATP synthase subunit delta from Staphylococcus saprophyticus subsp. saprophyticus (strain ATCC 15305 / DSM 20229 / NCIMB 8711 / NCTC 7292 / S-41).